We begin with the raw amino-acid sequence, 385 residues long: Protein-glutamate methylesterase/protein-glutamine glutaminase (385 aa).

Residue Asp53 is modified to 4-aspartylphosphate. The CheB-type methylesterase domain maps to 196–385; the sequence is KHKTGKIIVV…EIADHVLRRS (190 aa). Catalysis depends on residues Ser208, His234, and Asp330.

Belongs to the CheB family. Post-translationally, phosphorylated by CheA. Phosphorylation of the N-terminal regulatory domain activates the methylesterase activity.

Its subcellular location is the cytoplasm. The catalysed reaction is [protein]-L-glutamate 5-O-methyl ester + H2O = L-glutamyl-[protein] + methanol + H(+). The enzyme catalyses L-glutaminyl-[protein] + H2O = L-glutamyl-[protein] + NH4(+). Its function is as follows. Involved in chemotaxis. Part of a chemotaxis signal transduction system that modulates chemotaxis in response to various stimuli. Catalyzes the demethylation of specific methylglutamate residues introduced into the chemoreceptors (methyl-accepting chemotaxis proteins or MCP) by CheR. Also mediates the irreversible deamidation of specific glutamine residues to glutamic acid. In Borreliella burgdorferi (strain ATCC 35210 / DSM 4680 / CIP 102532 / B31) (Borrelia burgdorferi), this protein is Protein-glutamate methylesterase/protein-glutamine glutaminase.